Consider the following 430-residue polypeptide: Gamma-glutamyl phosphate reductase (430 aa).

This sequence belongs to the gamma-glutamyl phosphate reductase family.

It is found in the cytoplasm. The enzyme catalyses L-glutamate 5-semialdehyde + phosphate + NADP(+) = L-glutamyl 5-phosphate + NADPH + H(+). The protein operates within amino-acid biosynthesis; L-proline biosynthesis; L-glutamate 5-semialdehyde from L-glutamate: step 2/2. Its function is as follows. Catalyzes the NADPH-dependent reduction of L-glutamate 5-phosphate into L-glutamate 5-semialdehyde and phosphate. The product spontaneously undergoes cyclization to form 1-pyrroline-5-carboxylate. In Rhodopseudomonas palustris (strain HaA2), this protein is Gamma-glutamyl phosphate reductase.